A 443-amino-acid polypeptide reads, in one-letter code: Ribulose bisphosphate carboxylase large chain (443 aa).

Substrate is bound by residues asparagine 89 and threonine 139. Residue lysine 141 is the Proton acceptor of the active site. Lysine 143 lines the substrate pocket. Residues lysine 167, aspartate 169, and glutamate 170 each contribute to the Mg(2+) site. An N6-carboxylysine modification is found at lysine 167. Residue histidine 260 is the Proton acceptor of the active site. The substrate site is built by arginine 261, histidine 293, and serine 345.

Belongs to the RuBisCO large chain family. Type I subfamily. Heterohexadecamer of 8 large chains and 8 small chains; disulfide-linked. The disulfide link is formed within the large subunit homodimers. Requires Mg(2+) as cofactor. The disulfide bond which can form in the large chain dimeric partners within the hexadecamer appears to be associated with oxidative stress and protein turnover.

It is found in the plastid. The protein localises to the chloroplast. It carries out the reaction 2 (2R)-3-phosphoglycerate + 2 H(+) = D-ribulose 1,5-bisphosphate + CO2 + H2O. The catalysed reaction is D-ribulose 1,5-bisphosphate + O2 = 2-phosphoglycolate + (2R)-3-phosphoglycerate + 2 H(+). In terms of biological role, ruBisCO catalyzes two reactions: the carboxylation of D-ribulose 1,5-bisphosphate, the primary event in carbon dioxide fixation, as well as the oxidative fragmentation of the pentose substrate in the photorespiration process. Both reactions occur simultaneously and in competition at the same active site. This is Ribulose bisphosphate carboxylase large chain from Sesamum indicum (Oriental sesame).